We begin with the raw amino-acid sequence, 306 residues long: D-alanine--D-alanine ligase (306 aa).

Residues R101–E300 enclose the ATP-grasp domain. Residue M128–T182 participates in ATP binding. Mg(2+) is bound by residues D250, E267, and N269.

It belongs to the D-alanine--D-alanine ligase family. Mg(2+) is required as a cofactor. It depends on Mn(2+) as a cofactor.

Its subcellular location is the cytoplasm. The catalysed reaction is 2 D-alanine + ATP = D-alanyl-D-alanine + ADP + phosphate + H(+). It participates in cell wall biogenesis; peptidoglycan biosynthesis. In terms of biological role, cell wall formation. This is D-alanine--D-alanine ligase from Xanthobacter autotrophicus (strain ATCC BAA-1158 / Py2).